Reading from the N-terminus, the 462-residue chain is Cysteine--tRNA ligase (462 aa).

Cysteine 29 contributes to the Zn(2+) binding site. The 'HIGH' region motif lies at 31–41 (PTVYDHAHIGN). Zn(2+) is bound by residues cysteine 214, histidine 239, and glutamate 243. Positions 272–276 (KMSKS) match the 'KMSKS' region motif. Lysine 275 is a binding site for ATP.

It belongs to the class-I aminoacyl-tRNA synthetase family. As to quaternary structure, monomer. The cofactor is Zn(2+).

The protein resides in the cytoplasm. The catalysed reaction is tRNA(Cys) + L-cysteine + ATP = L-cysteinyl-tRNA(Cys) + AMP + diphosphate. This chain is Cysteine--tRNA ligase, found in Xanthobacter autotrophicus (strain ATCC BAA-1158 / Py2).